The following is a 98-amino-acid chain: Co-chaperonin GroES (98 aa).

Belongs to the GroES chaperonin family. In terms of assembly, heptamer of 7 subunits arranged in a ring. Interacts with the chaperonin GroEL.

It localises to the cytoplasm. Together with the chaperonin GroEL, plays an essential role in assisting protein folding. The GroEL-GroES system forms a nano-cage that allows encapsulation of the non-native substrate proteins and provides a physical environment optimized to promote and accelerate protein folding. GroES binds to the apical surface of the GroEL ring, thereby capping the opening of the GroEL channel. This chain is Co-chaperonin GroES, found in Coprothermobacter proteolyticus (strain ATCC 35245 / DSM 5265 / OCM 4 / BT).